Reading from the N-terminus, the 95-residue chain is Large ribosomal subunit protein eL43 (95 aa).

Residues 38 to 59 (CPDCGSEAVSREGTGIWQCGKC) form a C4-type zinc finger.

The protein belongs to the eukaryotic ribosomal protein eL43 family. The cofactor is Zn(2+).

The chain is Large ribosomal subunit protein eL43 from Halobacterium salinarum (strain ATCC 29341 / DSM 671 / R1).